Consider the following 214-residue polypeptide: Phosphoenolpyruvate guanylyltransferase (214 aa).

3 residues coordinate phosphoenolpyruvate: threonine 139, glycine 155, and serine 158.

Belongs to the CofC family.

The enzyme catalyses phosphoenolpyruvate + GTP + H(+) = enolpyruvoyl-2-diphospho-5'-guanosine + diphosphate. Its pathway is cofactor biosynthesis; coenzyme F420 biosynthesis. Functionally, guanylyltransferase that catalyzes the activation of phosphoenolpyruvate (PEP) as enolpyruvoyl-2-diphospho-5'-guanosine, via the condensation of PEP with GTP. It is involved in the biosynthesis of coenzyme F420, a hydride carrier cofactor. This chain is Phosphoenolpyruvate guanylyltransferase, found in Salinispora arenicola (strain CNS-205).